Reading from the N-terminus, the 308-residue chain is UDP-N-acetylenolpyruvoylglucosamine reductase (308 aa).

Positions Val32–Gly196 constitute an FAD-binding PCMH-type domain. The active site involves Arg176. Ser225 acts as the Proton donor in catalysis. Glu296 is a catalytic residue.

Belongs to the MurB family. It depends on FAD as a cofactor.

The protein resides in the cytoplasm. The catalysed reaction is UDP-N-acetyl-alpha-D-muramate + NADP(+) = UDP-N-acetyl-3-O-(1-carboxyvinyl)-alpha-D-glucosamine + NADPH + H(+). It functions in the pathway cell wall biogenesis; peptidoglycan biosynthesis. In terms of biological role, cell wall formation. This chain is UDP-N-acetylenolpyruvoylglucosamine reductase, found in Legionella pneumophila (strain Lens).